A 364-amino-acid chain; its full sequence is Methylthioribose-1-phosphate isomerase (364 aa).

Substrate contacts are provided by residues 53 to 55, R90, and Q203; that span reads RGA. Catalysis depends on D244, which acts as the Proton donor. 254-255 is a substrate binding site; it reads NK.

It belongs to the eIF-2B alpha/beta/delta subunits family. MtnA subfamily.

It carries out the reaction 5-(methylsulfanyl)-alpha-D-ribose 1-phosphate = 5-(methylsulfanyl)-D-ribulose 1-phosphate. It functions in the pathway amino-acid biosynthesis; L-methionine biosynthesis via salvage pathway; L-methionine from S-methyl-5-thio-alpha-D-ribose 1-phosphate: step 1/6. Functionally, catalyzes the interconversion of methylthioribose-1-phosphate (MTR-1-P) into methylthioribulose-1-phosphate (MTRu-1-P). The polypeptide is Methylthioribose-1-phosphate isomerase (Rhizobium meliloti (strain 1021) (Ensifer meliloti)).